Reading from the N-terminus, the 276-residue chain is Mitochondrial outer membrane protein porin of 34 kDa (276 aa).

It belongs to the eukaryotic mitochondrial porin (TC 1.B.8.1) family.

The protein resides in the mitochondrion outer membrane. Functionally, forms a channel through the cell membrane that allows diffusion of small hydrophilic molecules. The channel adopts an open conformation at low or zero membrane potential and a closed conformation at potentials above 30-40 mV. The open state has a weak anion selectivity whereas the closed state is cation-selective. The protein is Mitochondrial outer membrane protein porin of 34 kDa of Solanum tuberosum (Potato).